The following is a 49-amino-acid chain: uncharacterized protein (49 aa).

The helical transmembrane segment at 5 to 27 (ILEILSAFIRILFKLLYCWALFF) threads the bilayer.

It localises to the membrane. This is an uncharacterized protein from Saccharomyces cerevisiae (strain ATCC 204508 / S288c) (Baker's yeast).